A 551-amino-acid chain; its full sequence is L-lactate permease (551 aa).

The next 12 membrane-spanning stretches (helical) occupy residues 13-33, 37-57, 69-89, 131-151, 159-179, 194-214, 244-264, 306-326, 366-386, 405-425, 438-458, and 530-550; these read NIWLSSLIASLPILFFFFALI, LKGYVAASWTVVIALAVALLF, VVYGFFYGLWPIAWIIIAAVF, GAAGFGAPVAITAALLVGLGF, LCLIVNTAPVAFGAMGIPILV, MVGRQLPFLTIIVLFWIMAIM, FIGPELPDIISSLVSLVCLTL, FLFLTATVTLWSVPPFKALFA, FDWFSATGTAILFAALLSIVW, LALPIYSIGMVLAFAFISNYS, TGSAFTFFSPFLGWLGVFLTG, and IFTCMVGVITTLQAYVLTWMI.

Belongs to the lactate permease family.

Its subcellular location is the cell inner membrane. The enzyme catalyses (S)-lactate(in) + H(+)(in) = (S)-lactate(out) + H(+)(out). It catalyses the reaction (R)-lactate(in) + H(+)(in) = (R)-lactate(out) + H(+)(out). It carries out the reaction glycolate(in) + H(+)(in) = glycolate(out) + H(+)(out). Uptake of L-lactate across the membrane. Can also transport D-lactate and glycolate. Seems to be driven by a proton motive force. The chain is L-lactate permease (lldP) from Salmonella typhimurium (strain LT2 / SGSC1412 / ATCC 700720).